Consider the following 148-residue polypeptide: Azurin (148 aa).

The first 20 residues, 1–20 (MLRKLAAVSLLSLLSAPLLA), serve as a signal peptide directing secretion. A Plastocyanin-like domain is found at 21–148 (AECSVDIQGN…ALMKGTLTLK (128 aa)). Cys-23 and Cys-46 form a disulfide bridge. Positions 66, 132, 137, and 141 each coordinate Cu cation.

It localises to the periplasm. Transfers electrons from cytochrome c551 to cytochrome oxidase. This Pseudomonas aeruginosa (strain ATCC 15692 / DSM 22644 / CIP 104116 / JCM 14847 / LMG 12228 / 1C / PRS 101 / PAO1) protein is Azurin (azu).